We begin with the raw amino-acid sequence, 375 residues long: Carbamoyl phosphate synthase small chain (375 aa).

Residues 1 to 185 (MTQPAILVLE…LNANAFVQAE (185 aa)) are CPSase. The L-glutamine site is built by S47, G237, and G239. Residues 189-375 (KVVAYDYGVK…FVASMAEAKS (187 aa)) enclose the Glutamine amidotransferase type-1 domain. C265 serves as the catalytic Nucleophile. The L-glutamine site is built by L266, Q269, N307, G309, and F310. Catalysis depends on residues H349 and E351.

The protein belongs to the CarA family. Composed of two chains; the small (or glutamine) chain promotes the hydrolysis of glutamine to ammonia, which is used by the large (or ammonia) chain to synthesize carbamoyl phosphate. Tetramer of heterodimers (alpha,beta)4.

The enzyme catalyses hydrogencarbonate + L-glutamine + 2 ATP + H2O = carbamoyl phosphate + L-glutamate + 2 ADP + phosphate + 2 H(+). It catalyses the reaction L-glutamine + H2O = L-glutamate + NH4(+). It functions in the pathway amino-acid biosynthesis; L-arginine biosynthesis; carbamoyl phosphate from bicarbonate: step 1/1. The protein operates within pyrimidine metabolism; UMP biosynthesis via de novo pathway; (S)-dihydroorotate from bicarbonate: step 1/3. Functionally, small subunit of the glutamine-dependent carbamoyl phosphate synthetase (CPSase). CPSase catalyzes the formation of carbamoyl phosphate from the ammonia moiety of glutamine, carbonate, and phosphate donated by ATP, constituting the first step of 2 biosynthetic pathways, one leading to arginine and/or urea and the other to pyrimidine nucleotides. The small subunit (glutamine amidotransferase) binds and cleaves glutamine to supply the large subunit with the substrate ammonia. The chain is Carbamoyl phosphate synthase small chain from Xanthomonas campestris pv. campestris (strain ATCC 33913 / DSM 3586 / NCPPB 528 / LMG 568 / P 25).